The chain runs to 315 residues: Ribosomal RNA small subunit methyltransferase H (315 aa).

Residues 33–35 (AGH), Asp-53, Phe-80, Asp-101, and Gln-108 contribute to the S-adenosyl-L-methionine site.

Belongs to the methyltransferase superfamily. RsmH family.

It localises to the cytoplasm. It carries out the reaction cytidine(1402) in 16S rRNA + S-adenosyl-L-methionine = N(4)-methylcytidine(1402) in 16S rRNA + S-adenosyl-L-homocysteine + H(+). Its function is as follows. Specifically methylates the N4 position of cytidine in position 1402 (C1402) of 16S rRNA. In Natranaerobius thermophilus (strain ATCC BAA-1301 / DSM 18059 / JW/NM-WN-LF), this protein is Ribosomal RNA small subunit methyltransferase H.